The chain runs to 748 residues: Translation factor GUF1 homolog 2, mitochondrial (748 aa).

A mitochondrion-targeting transit peptide spans 1 to 29 (MRVGCCLLLKPLRQRLCTASISSRHIMRW). Residues 94 to 276 (SHIRNVAVVA…AIIERVPPPT (183 aa)) form the tr-type G domain. Residues 103–110 (AHVDHGKT), 167–171 (DTPGH), and 221–224 (TKMD) contribute to the GTP site.

It belongs to the TRAFAC class translation factor GTPase superfamily. Classic translation factor GTPase family. LepA subfamily.

The protein localises to the mitochondrion inner membrane. It carries out the reaction GTP + H2O = GDP + phosphate + H(+). Its function is as follows. Promotes mitochondrial protein synthesis. May act as a fidelity factor of the translation reaction, by catalyzing a one-codon backward translocation of tRNAs on improperly translocated ribosomes. Binds to mitochondrial ribosomes in a GTP-dependent manner. The protein is Translation factor GUF1 homolog 2, mitochondrial of Trypanosoma cruzi (strain CL Brener).